A 143-amino-acid chain; its full sequence is Hemoglobin subunit alpha-2 (143 aa).

Position 2 is an N-acetylserine (serine 2). Positions 2 to 143 (SLSSKDKATV…LALALSEKYR (142 aa)) constitute a Globin domain. Residue histidine 60 participates in O2 binding. Histidine 89 contributes to the heme b binding site.

This sequence belongs to the globin family. As to quaternary structure, hb 2 is a heterotetramer of two alpha-2 and two beta-1 chains. Hb 3 is a heterotetramer of two alpha-2 and two beta-2 chains. In terms of tissue distribution, red blood cells.

Functionally, involved in oxygen transport from gills to the various peripheral tissues. In Arctogadus glacialis (Arctic cod), this protein is Hemoglobin subunit alpha-2 (hba2).